Consider the following 292-residue polypeptide: uncharacterized protein (292 aa).

The 58-residue stretch at 1–58 folds into the HTH lysR-type domain; that stretch reads MEWEQLEYFQTLARMQHVTKAAKSLSITQPALSRSIARLENHLGVPLFDRQGRSISLN. Positions 18–37 form a DNA-binding region, H-T-H motif; it reads VTKAAKSLSITQPALSRSIA.

The protein belongs to the LysR transcriptional regulatory family.

This is an uncharacterized protein from Bacillus subtilis (strain 168).